The chain runs to 388 residues: Spermosin (388 aa).

The N-terminal stretch at 1 to 22 (MAAINVIFISGAIALFALTGSC) is a signal peptide. The segment covering 29 to 49 (FTNKPYATQNPYSPPQTNQPT) has biased composition (polar residues). The segment at 29–98 (FTNKPYATQN…SENSESENSE (70 aa)) is disordered. Over residues 54 to 64 (QPGPAPTPAPY) the composition is skewed to pro residues. 5 cysteine pairs are disulfide-bonded: Cys116/Cys251, Cys163/Cys179, Cys265/Cys330, Cys295/Cys310, and Cys320/Cys349. The 243-residue stretch at 130–372 (IVGGAEAVPN…NLEWLCCYMP (243 aa)) folds into the Peptidase S1 domain. Catalysis depends on charge relay system residues His178 and Asp231. The Charge relay system role is filled by Ser324.

This sequence belongs to the peptidase S1 family. Heterodimer of a heavy chain and either an L1 light chain or an L2 light chain linked by a disulfide bond. As to expression, detected in sperm, but not in unfertilized eggs (at protein level). Expressed in gonad, but not in hepatopancreas, intestine or branchial basket.

The protein resides in the secreted. The catalysed reaction is Hydrolyzes arginyl bonds, preferably with Pro in the P2 position.. With respect to regulation, inhibited by peptidyl-argininals with Pro in the P2 position, diisopropyl fluorophosphate, phenylmethanesulfonyl fluoride, leupeptin, antipain, soybean trypsin inhibitor, aprotinin, ovomucoid, valyl-prolyl-arginyl-chloromethane, glycyl-valyl-arginyl-chloromethane, p-aminobenzamidine, benzamidine, zinc chloride and mercuric chloride. Its function is as follows. Trypsin-like protease with a narrow substrate specificity. Preferentially hydrolyzes substrates with Pro in the P2 position and Val in the P3 position. Plays a role in fertilization. This chain is Spermosin, found in Halocynthia roretzi (Sea squirt).